A 288-amino-acid polypeptide reads, in one-letter code: 33 kDa chaperonin (288 aa).

2 disulfides stabilise this stretch: C236-C238 and C269-C272.

The protein belongs to the HSP33 family. Under oxidizing conditions two disulfide bonds are formed involving the reactive cysteines. Under reducing conditions zinc is bound to the reactive cysteines and the protein is inactive.

The protein localises to the cytoplasm. Redox regulated molecular chaperone. Protects both thermally unfolding and oxidatively damaged proteins from irreversible aggregation. Plays an important role in the bacterial defense system toward oxidative stress. The polypeptide is 33 kDa chaperonin (Lactococcus lactis subsp. cremoris (strain SK11)).